The sequence spans 470 residues: D-serine/D-alanine/glycine transporter (470 aa).

A run of 12 helical transmembrane segments spans residues 30–50, 51–71, 102–122, 128–148, 162–182, 211–231, 256–276, 283–303, 350–370, 371–391, 413–433, and 441–461; these read LIAIGGAIGTGLFMGSGKTIS, LAGPSIIFVYMIIGFMLFFVM, FTGWTYWFCWVVTGMADVVAI, FWFPGLSDWVASLSVIILLLV, FWFAMIKIVAIVSLIVVGLVM, LSGFFAGFQIAVFAFVGIELV, IIMFYVFSLIVIMSVTPWSSV, FVELFVLVGLPAAASVINFVV, FSCICLLGGVVMLYVNPSVIG, AFTMITTVSAILFMFVWTIIL, PLGKLMCWVCMAFFVFVLVLL, and QALLVTPLWFIALGLGWLFIG.

The protein belongs to the amino acid-polyamine-organocation (APC) superfamily. Amino acid transporter (AAT) (TC 2.A.3.1) family.

It localises to the cell inner membrane. It catalyses the reaction D-alanine(in) + H(+)(in) = D-alanine(out) + H(+)(out). The enzyme catalyses D-serine(out) + H(+)(out) = D-serine(in) + H(+)(in). The catalysed reaction is glycine(in) + H(+)(in) = glycine(out) + H(+)(out). It carries out the reaction D-cycloserine(in) + H(+)(in) = D-cycloserine(out) + H(+)(out). With respect to regulation, uptake of D-serine is inhibited by D-alanine, D-cycloserine, glycine and at high concentrations of D-threonine. Its function is as follows. Permease that is involved in the transport across the cytoplasmic membrane of D-alanine, D-serine and glycine. Is the only transporter of D-alanine. Transports D-serine less efficiently than DsdX. In addition, in minimal media, transports the broad spectrum antibiotic D-cycloserine into the cell. Transports D-cycloserine only in minimal media, and not in a complex medium, suggesting that CycA does not play a role in D-cycloserine transport when E.coli is grown in a complex or biologically relevant medium, probably due to competition from other CycA substrates present in the medium. This is D-serine/D-alanine/glycine transporter (cycA) from Escherichia coli O6:H1 (strain CFT073 / ATCC 700928 / UPEC).